A 212-amino-acid polypeptide reads, in one-letter code: Soluble inorganic pyrophosphatase 1 (212 aa).

2 residues coordinate substrate: lysine 62 and arginine 76. The active-site Proton donor is tyrosine 84. Residue tyrosine 88 coordinates substrate. Residues aspartate 98, aspartate 103, and aspartate 135 each coordinate Mg(2+). Tyrosine 172 is a substrate binding site.

It belongs to the PPase family. In terms of assembly, monomer. Mg(2+) serves as cofactor. In terms of tissue distribution, ubiquitous. Lower level of expression in ovary, stigma and pollen.

The protein localises to the cytoplasm. The catalysed reaction is diphosphate + H2O = 2 phosphate + H(+). With respect to regulation, inhibited by Zn(2+), Ca(2+), Ba(2+), Fe(2+), Co(2+), Cu(2+), Eu(2+), Eu(3+) and Mn(2+). Functionally, catalyzes the irreversible hydrolysis of pyrophosphate (PPi) to phosphate. The MgPPi(2-) complex binds to the enzyme only after a free Mg(2+) ion has bound. No activity with glycerol-3-phosphate, glucose-6-phosphate, p-nitrophenylphosphate, ADP, NADP(+), NAD(+),NADH, NADPH or phosphoribosyl pyrophosphate as substrates. Controls the equilibrium of gluconeogenic reactions in the heterotrophic growth phase of early seedling establishment. Determinates the rate of cytosolic glycolysis, providing carbon for seed storage lipid accumulation. The protein is Soluble inorganic pyrophosphatase 1 of Arabidopsis thaliana (Mouse-ear cress).